A 1386-amino-acid polypeptide reads, in one-letter code: YLP motif-containing protein 1 (1386 aa).

Disordered regions lie at residues 1–336 (MYPN…EDAR) and 517–1068 (TSIP…PPGR). A compositionally biased stretch (pro residues) spans 14–27 (YPPPPVPPPPPPVA). 2 stretches are compositionally biased toward low complexity: residues 31 to 50 (ASPGPGYSSSTAPAAPSSSG) and 59 to 80 (LAQLQQLQQMHQKQMQCVLQPH). Pro residues-rich tracts occupy residues 81-93 (HLPPPPLPPPPVM), 102-114 (QPPPPPMPPPPGP), 148-158 (PESPPVPPGSY), 166-176 (MPPPQPPPSYY), and 184-203 (YLPPAQPGPSKPQLPPPPSI). Over residues 237–259 (STMTPQEQQQYWYRQHLLSLQQR) the composition is skewed to polar residues. Positions 260-270 (TKVHLPGHKKG) are enriched in basic residues. Basic and acidic residues predominate over residues 276–285 (DVPEPIKEEA). The span at 302–317 (PPLPPPNEEAPPPLSP) shows a compositional bias: pro residues. Acidic residues predominate over residues 320–333 (PQSEDSEDSEDSEE). 3 stretches are compositionally biased toward pro residues: residues 517 to 558 (TSIP…PPPA), 566 to 603 (PVLPPPALPGGPPILPLPPLSSATPPPGIPPPGAPQGM), and 641 to 650 (PPSPYHPPPQ). Polar residues predominate over residues 651-667 (SEQVNSKPLNKVFSSEQ). Lys-683 is modified (N6-methyllysine). The span at 706–722 (RGPREQKEQLQKLKDFG) shows a compositional bias: basic and acidic residues. Positions 746-761 (MYPPPGSYRPPPPMGK) are enriched in pro residues. Residues 762–779 (PPGSIVRPSAPPARSSIP) show a composition bias toward low complexity. 2 stretches are compositionally biased toward pro residues: residues 781–803 (TRPPVPIPPPPPPPPPPPPPPPV) and 848–878 (PVLPPPPVHSSIPPPGPMPMGMPPMSKPPPV). Lys-894 is covalently cross-linked (Glycyl lysine isopeptide (Lys-Gly) (interchain with G-Cter in SUMO2)). Composition is skewed to basic and acidic residues over residues 904 to 938 (ITLRPDPLPERSTFDADHAGQRDRYDRDRDREPYF), 945 to 1014 (TDHR…DRPP), 1023 to 1033 (GERRTYPEERM), and 1049 to 1068 (RVEKKPESKNVDDILKPPGR). Lys-951 is covalently cross-linked (Glycyl lysine isopeptide (Lys-Gly) (interchain with G-Cter in SUMO2)). Positions 1336–1343 (KKRVRWAD) are involved in interaction with PPP1CA.

In terms of assembly, interacts with PPP1CA and NCOA5. Forms a complex with ILF2, ILF3, KHDRBS1, RBMX, NCOA5 and PPP1CA.

It localises to the nucleus. The protein localises to the nucleus speckle. In terms of biological role, plays a role in the reduction of telomerase activity during differentiation of embryonic stem cells by binding to the core promoter of TERT and controlling its down-regulation. The polypeptide is YLP motif-containing protein 1 (Ylpm1) (Mus musculus (Mouse)).